We begin with the raw amino-acid sequence, 101 residues long: Small ribosomal subunit protein bS6 (101 aa).

The protein belongs to the bacterial ribosomal protein bS6 family.

Functionally, binds together with bS18 to 16S ribosomal RNA. The protein is Small ribosomal subunit protein bS6 of Nitratidesulfovibrio vulgaris (strain DSM 19637 / Miyazaki F) (Desulfovibrio vulgaris).